We begin with the raw amino-acid sequence, 482 residues long: Glutamate synthase [NADPH] small chain (482 aa).

Residues 39–72 enclose the 4Fe-4S ferredoxin-type domain; the sequence is ERANEQANRCSQCGVPFCQVHCPVSNNIPDWLKL. 4 residues coordinate [4Fe-4S] cluster: Cys95, Cys99, Cys105, and Cys109.

As to quaternary structure, aggregate of 4 catalytic active heterodimers, consisting of a large and a small subunit. It depends on [4Fe-4S] cluster as a cofactor.

The catalysed reaction is 2 L-glutamate + NADP(+) = L-glutamine + 2-oxoglutarate + NADPH + H(+). It functions in the pathway amino-acid biosynthesis; L-glutamate biosynthesis via GLT pathway; L-glutamate from 2-oxoglutarate and L-glutamine (NADP(+) route): step 1/1. The protein operates within energy metabolism; nitrogen metabolism. The sequence is that of Glutamate synthase [NADPH] small chain (gltD) from Azospirillum brasilense.